A 333-amino-acid polypeptide reads, in one-letter code: Protoheme IX farnesyltransferase (333 aa).

8 consecutive transmembrane segments (helical) span residues 63 to 83, 109 to 129, 132 to 152, 160 to 180, 188 to 208, 214 to 234, 245 to 265, and 292 to 312; these read LACT…LNCI, AAFI…VSGV, LAAG…TAIL, IVIG…AASG, WLFS…ALLL, AVGI…RAIS, GFGV…LIPF, and WSIF…LPMA.

The protein belongs to the UbiA prenyltransferase family. Protoheme IX farnesyltransferase subfamily.

The protein resides in the cell inner membrane. The catalysed reaction is heme b + (2E,6E)-farnesyl diphosphate + H2O = Fe(II)-heme o + diphosphate. Its pathway is porphyrin-containing compound metabolism; heme O biosynthesis; heme O from protoheme: step 1/1. Its function is as follows. Converts heme B (protoheme IX) to heme O by substitution of the vinyl group on carbon 2 of heme B porphyrin ring with a hydroxyethyl farnesyl side group. In Prochlorococcus marinus (strain MIT 9313), this protein is Protoheme IX farnesyltransferase.